The sequence spans 694 residues: Type VI secretion system spike protein VgrG2 (694 aa).

The protein belongs to the VgrG protein family.

It localises to the secreted. Its function is as follows. Part of the type VI secretion system specialized secretion system, which delivers several virulence factors in both prokaryotic and eukaryotic cells during infection. Forms the spike at the tip of the elongating tube formed by haemolysin co-regulated protein Hcp. Allows the delivery of the VasX antibacterial toxin to target cells where it exerts its toxicity. The protein is Type VI secretion system spike protein VgrG2 (vgrG2) of Vibrio cholerae serotype O1 (strain ATCC 39315 / El Tor Inaba N16961).